Consider the following 190-residue polypeptide: Surfactant protein C (190 aa).

A propeptide spanning residues Met-1–Leu-24 is cleaved from the precursor. 2 S-palmitoyl cysteine lipidation sites follow: Cys-28 and Cys-29. A propeptide spanning residues His-59–Thr-190 is cleaved from the precursor. Residues Phe-94–Thr-190 form the BRICHOS domain. Cys-121 and Cys-182 are disulfide-bonded.

It localises to the secreted. Its subcellular location is the extracellular space. The protein localises to the surface film. Functionally, pulmonary surfactant associated proteins promote alveolar stability by lowering the surface tension at the air-liquid interface in the peripheral air spaces. The polypeptide is Surfactant protein C (SFTPC) (Bos taurus (Bovine)).